A 280-amino-acid chain; its full sequence is Transcription factor MYB46 (280 aa).

HTH myb-type domains lie at 15 to 67 (VKKM…INYL) and 68 to 122 (RPDL…KKRL). 2 DNA-binding regions (H-T-H motif) span residues 43–67 (WSDV…INYL) and 95–118 (WSQI…NSTI). A disordered region spans residues 129-150 (SNLINNSSSSPNTASDSSSNSA).

As to expression, expressed at low levels in stems and siliques, specifically in xylem.

Its subcellular location is the nucleus. In terms of biological role, transcription activator. Involved in the regulation of secondary wall biosynthesis in fibers and vessels. Transcription activator of the mannan synthase CSLA9 that recognizes and binds to the DNA consensus sequence 5'-[AG][GT]T[AT]GGT[GA]-3' cis-regulatory element of CSLA9 promoter. Transcription factor that acts as a molecular switch in the NAC012/SND1-mediated transcriptional network regulating secondary wall biosynthesis. Is directly activated by NAC012/SND1. Functions redundantly with MYB83 in the transcriptional regulatory cascade leading to secondary wall formation in fibers and vessels. Transcription activator that binds to the DNA consensus sequence 5'-ACC[AT]A[AC][TC]-3', designated as the secondary wall MYB-responsive element (SMRE). Regulates directly numerous transcription factors and a number of genes involved in secondary wall biosynthesis that contain SMRE elements in their promoters. Is an obligate component of the transcriptional regulatory complex toward the commitment of secondary wall cellulose synthesis. Is required for functional expression of the three secondary wall CESA genes, CESA4, CESA7 and CESA8. This is Transcription factor MYB46 from Arabidopsis thaliana (Mouse-ear cress).